Consider the following 369-residue polypeptide: Histidinol-phosphate aminotransferase 2 (369 aa).

Position 229 is an N6-(pyridoxal phosphate)lysine (K229).

This sequence belongs to the class-II pyridoxal-phosphate-dependent aminotransferase family. Histidinol-phosphate aminotransferase subfamily. In terms of assembly, homodimer. The cofactor is pyridoxal 5'-phosphate.

The enzyme catalyses L-histidinol phosphate + 2-oxoglutarate = 3-(imidazol-4-yl)-2-oxopropyl phosphate + L-glutamate. It functions in the pathway amino-acid biosynthesis; L-histidine biosynthesis; L-histidine from 5-phospho-alpha-D-ribose 1-diphosphate: step 7/9. This Pseudomonas aeruginosa (strain ATCC 15692 / DSM 22644 / CIP 104116 / JCM 14847 / LMG 12228 / 1C / PRS 101 / PAO1) protein is Histidinol-phosphate aminotransferase 2 (hisC2).